We begin with the raw amino-acid sequence, 248 residues long: ATP synthase subunit a, chloroplastic (248 aa).

5 helical membrane-spanning segments follow: residues 37–57 (AQVLITSWVVIVLLSGLAFVT), 96–116 (VPFIGTLFLFIFVSNWSGALF), 135–155 (INTTVALALLTSVAYFYAGLH), 200–220 (LVVAVLISLVPLVVPIPMMFL), and 221–241 (GLFTSAIQALIFATLAAAYIG).

The protein belongs to the ATPase A chain family. As to quaternary structure, F-type ATPases have 2 components, CF(1) - the catalytic core - and CF(0) - the membrane proton channel. CF(1) has five subunits: alpha(3), beta(3), gamma(1), delta(1), epsilon(1). CF(0) has four main subunits: a, b, b' and c.

It is found in the plastid. The protein resides in the chloroplast thylakoid membrane. Its function is as follows. Key component of the proton channel; it plays a direct role in the translocation of protons across the membrane. The chain is ATP synthase subunit a, chloroplastic from Psilotum nudum (Whisk fern).